The primary structure comprises 314 residues: MNKLKLIFAGTPDFAARHLAALLSSDHEVVAVYTQPDKPAGRGQKLTASPVKELALAHNLPVYQPASLRKEEAQAELAALGADLMVVVAYGLILPKAVLDTPRLGCINVHGSLLPRWRGAAPIQRSIWAGDAETGVTIMQMDVGLDTGAMIRKVSCPIAADETSASLYDKLAGLGPQALVDTVNAMAAGNTAAEAQDDAQANYAEKLSKEEARIDWSMEAVAIERCTRAFNPWPISWFEVAGQTVKVWQAEVVAQDHGQAAGTLLKADKQGIDIATGKGVLRLLTLQPPGKKAMSVTDLLNSRRDWFEPGTQLN.

Residue 112–115 (SLLP) participates in (6S)-5,6,7,8-tetrahydrofolate binding.

The protein belongs to the Fmt family.

The enzyme catalyses L-methionyl-tRNA(fMet) + (6R)-10-formyltetrahydrofolate = N-formyl-L-methionyl-tRNA(fMet) + (6S)-5,6,7,8-tetrahydrofolate + H(+). In terms of biological role, attaches a formyl group to the free amino group of methionyl-tRNA(fMet). The formyl group appears to play a dual role in the initiator identity of N-formylmethionyl-tRNA by promoting its recognition by IF2 and preventing the misappropriation of this tRNA by the elongation apparatus. The protein is Methionyl-tRNA formyltransferase of Aeromonas hydrophila subsp. hydrophila (strain ATCC 7966 / DSM 30187 / BCRC 13018 / CCUG 14551 / JCM 1027 / KCTC 2358 / NCIMB 9240 / NCTC 8049).